A 154-amino-acid polypeptide reads, in one-letter code: Transcriptional repressor NrdR (154 aa).

The tract at residues 1 to 22 (MRCPFCAHDDSQVKDSRPTDDG) is disordered. Residues 3–34 (CPFCAHDDSQVKDSRPTDDGAAIRRRRQCEGC) fold into a zinc finger. The segment covering 7–22 (AHDDSQVKDSRPTDDG) has biased composition (basic and acidic residues). The region spanning 49–139 (MTVVKSDGRR…VYKDFREAKD (91 aa)) is the ATP-cone domain.

The protein belongs to the NrdR family. Zn(2+) serves as cofactor.

Its function is as follows. Negatively regulates transcription of bacterial ribonucleotide reductase nrd genes and operons by binding to NrdR-boxes. This chain is Transcriptional repressor NrdR, found in Rhizorhabdus wittichii (strain DSM 6014 / CCUG 31198 / JCM 15750 / NBRC 105917 / EY 4224 / RW1) (Sphingomonas wittichii).